Consider the following 345-residue polypeptide: Transcription initiation factor IIB (345 aa).

The TFIIB-type zinc finger occupies 8–40 (VGRNCPHCSAVDSLQTDDVMGEVACTACALVVA). Zn(2+) is bound by residues cysteine 12, cysteine 15, cysteine 32, and cysteine 35. Disordered stretches follow at residues 59-89 (DVDH…HMSS) and 318-345 (PTAG…REET). The span at 71–83 (TAATSAAGSLSAA) shows a compositional bias: low complexity.

This sequence belongs to the TFIIB family. In terms of assembly, monomer. Interacts with RNA polymerase II subunits RPB1 and RPB2. Interacts with TBP; the interaction is direct.

It localises to the nucleus. Its function is as follows. Specifically binds to the promoter of the spliced leader (SL) RNA gene and thus is essential for SLRNA transcription. This chain is Transcription initiation factor IIB, found in Trypanosoma brucei brucei.